A 236-amino-acid chain; its full sequence is Sugar fermentation stimulation protein homolog (236 aa).

This sequence belongs to the SfsA family.

This chain is Sugar fermentation stimulation protein homolog, found in Synechococcus elongatus (strain ATCC 33912 / PCC 7942 / FACHB-805) (Anacystis nidulans R2).